Reading from the N-terminus, the 192-residue chain is MAAATTTLSSSSSSPSLTLINASHRFVSVTPFSSNSIFLRRRFRRLNRSLASSSSHSRRRYESDDRFFGGGDNYDVVPDDDGFSDDDDEEDERESSVDLLIRFLRSMFKKVSKRTKKASRRILPAAMSPRLVSFAVDGILLLGSLSITRAFLEVICNLGGTVFTVILLIRLFWAAASFFQTYGNSFGPNPVN.

The Nuclear localization signal signature appears at 43-50 (FRRLNRSL). The disordered stretch occupies residues 70–92 (GGDNYDVVPDDDGFSDDDDEEDE). Positions 77-92 (VPDDDGFSDDDDEEDE) are enriched in acidic residues. The next 2 membrane-spanning stretches (helical) occupy residues 122–142 (ILPA…ILLL) and 159–179 (GGTV…ASFF).

In terms of assembly, interacts with HY5 and COP1 in the nucleus. In terms of tissue distribution, expressed in young seedlings (e.g. hypocotyl and cotyledons) and in green tissues (e.g. leaves, stems, sepals, and young siliques).

Its subcellular location is the nucleus membrane. Functionally, negative regulator of photomorphogenesis modulating both light and abscisic acid (ABA) signaling pathways. Negatively regulates the light-mediated inhibition of hypocotyl elongation, probably in a PHYB-mediated signaling pathway, but promotes flowering time (especially in long days) and lateral root formation. Enhances light-regulated gene expression. Promotes COP1-mediated degradation of HY5 during seedling development (e.g. hypocotyl growth) through enhanced ubiquitination in the darkness. Also involved in root gravitropism. This is Protein SHORT HYPOCOTYL IN WHITE LIGHT 1 from Arabidopsis thaliana (Mouse-ear cress).